The primary structure comprises 66 residues: Large ribosomal subunit protein bL33c (66 aa).

Belongs to the bacterial ribosomal protein bL33 family.

The protein localises to the plastid. The protein resides in the chloroplast. The protein is Large ribosomal subunit protein bL33c of Illicium oligandrum (Star anise).